Consider the following 135-residue polypeptide: MEEKEQVDLNQLLNAIKSLTLQEIKIFTDKLQDELGISSDNLYSSRGILTESTSHNKEVEEIDEKTEFDIILEEVPSSSRITVIKVIRSITNSGLKEAKEFIEALPKTVKEGISKEEAESVKAQLEESGAKVTLR.

The protein belongs to the bacterial ribosomal protein bL12 family. Homodimer. Part of the ribosomal stalk of the 50S ribosomal subunit. Forms a multimeric L10(L12)X complex, where L10 forms an elongated spine to which 2 to 4 L12 dimers bind in a sequential fashion. Binds GTP-bound translation factors.

It is found in the plastid. The protein resides in the chloroplast. Forms part of the ribosomal stalk which helps the ribosome interact with GTP-bound translation factors. Is thus essential for accurate translation. The protein is Large ribosomal subunit protein bL12c of Chara vulgaris (Common stonewort).